The primary structure comprises 284 residues: 2-dehydro-3-deoxyphosphooctonate aldolase (284 aa).

This sequence belongs to the KdsA family.

The protein resides in the cytoplasm. The catalysed reaction is D-arabinose 5-phosphate + phosphoenolpyruvate + H2O = 3-deoxy-alpha-D-manno-2-octulosonate-8-phosphate + phosphate. Its pathway is carbohydrate biosynthesis; 3-deoxy-D-manno-octulosonate biosynthesis; 3-deoxy-D-manno-octulosonate from D-ribulose 5-phosphate: step 2/3. It functions in the pathway bacterial outer membrane biogenesis; lipopolysaccharide biosynthesis. In Serratia proteamaculans (strain 568), this protein is 2-dehydro-3-deoxyphosphooctonate aldolase.